The chain runs to 257 residues: 3-methyl-2-oxobutanoate hydroxymethyltransferase (257 aa).

Residues D42 and D86 each coordinate Mg(2+). 3-methyl-2-oxobutanoate contacts are provided by residues 42–43, D86, and K116; that span reads DS. E118 contacts Mg(2+). Catalysis depends on E185, which acts as the Proton acceptor.

Belongs to the PanB family. In terms of assembly, homodecamer; pentamer of dimers. Requires Mg(2+) as cofactor.

Its subcellular location is the cytoplasm. It catalyses the reaction 3-methyl-2-oxobutanoate + (6R)-5,10-methylene-5,6,7,8-tetrahydrofolate + H2O = 2-dehydropantoate + (6S)-5,6,7,8-tetrahydrofolate. Its pathway is cofactor biosynthesis; (R)-pantothenate biosynthesis; (R)-pantoate from 3-methyl-2-oxobutanoate: step 1/2. Catalyzes the reversible reaction in which hydroxymethyl group from 5,10-methylenetetrahydrofolate is transferred onto alpha-ketoisovalerate to form ketopantoate. This Prochlorococcus marinus (strain MIT 9301) protein is 3-methyl-2-oxobutanoate hydroxymethyltransferase.